The chain runs to 173 residues: NADH-ubiquinone oxidoreductase chain 6 (173 aa).

A run of 5 helical transmembrane segments spans residues 1–21, 27–47, 48–68, 87–107, and 139–159; these read MTYFVLFLGLCFVLGSLAVAS, YGVVGLVLASIAGCGWLLSLG, VSFVSLVLFMVYLGGMLVVFV, VVGYGVGFVAVLMVGLIVGGF, and CGVGMFLVAGWGLLLTLFVVL.

This sequence belongs to the complex I subunit 6 family.

It is found in the mitochondrion membrane. The enzyme catalyses a ubiquinone + NADH + 5 H(+)(in) = a ubiquinol + NAD(+) + 4 H(+)(out). In terms of biological role, core subunit of the mitochondrial membrane respiratory chain NADH dehydrogenase (Complex I) that is believed to belong to the minimal assembly required for catalysis. Complex I functions in the transfer of electrons from NADH to the respiratory chain. The immediate electron acceptor for the enzyme is believed to be ubiquinone. The polypeptide is NADH-ubiquinone oxidoreductase chain 6 (MT-ND6) (Aethia cristatella (Crested auklet)).